The following is a 513-amino-acid chain: MVEEVQKHSVHTLVFRSLKRTHDMFVADNGKPVPLDEESHKRKMAIKLRNEYGPVLHMPTSKENLKEKVPQNASDSYGHKQYPANQGQEVEYLVTGTHPYPPGPGVALTADTKIQRMPSESAAQSLAVALPASQARADANRPVPAGGEYRHPGAPDRAQPAGAVVMEGSNAKNSALMAKKAPTMPKPQWHPPWKLYRVISGHLGWVRCIAVEPGNQWFVTGSADRTIKIWDLASGKLKLSLTGHISTVRGVIVSTRSPYLFSCGEDKQVKCWDLEYNKVIRHYHGHLSAVYGLDLHPTIDVLVTCSRDSTARIWDVRTKASVHTLSGHTNAVATVRCQAAEPQIITGSHDTTIRLWDLVAGKTRVTLTNHKKSVRAVVLHPRHYTFASGSPDNIKQWKFPDGSFIQNLSGHNAIINTLTVNSDGVLVSGADNGTMHLWDWRTGYNFQRVHAAVQPGSLDSESGIFACAFDQSESRLLTAEADKTIKVYKEDDTATEETHPVSWKPEIIKRKRF.

Met-1 is subject to N-acetylmethionine. Phosphoserine is present on residues Ser-119 and Ser-200. 7 WD repeats span residues 201–240 (GHLGWVRCIAVEPGNQWFVTGSADRTIKIWDLASGKLKLS), 243–282 (GHISTVRGVIVSTRSPYLFSCGEDKQVKCWDLEYNKVIRH), 285–324 (GHLSAVYGLDLHPTIDVLVTCSRDSTARIWDVRTKASVHT), 327–366 (GHTNAVATVRCQAAEPQIITGSHDTTIRLWDLVAGKTRVT), 369–409 (NHKK…QNLS), 410–448 (GHNAIINTLTVNSDGVLVSGADNGTMHLWDWRTGYNFQR), and 459–498 (DSESGIFACAFDQSESRLLTAEADKTIKVYKEDDTATEET). Ser-390 is subject to Phosphoserine.

This sequence belongs to the WD repeat PRL1/PRL2 family. In terms of assembly, identified in the spliceosome C complex. Component of the PRP19-CDC5L splicing complex composed of a core complex comprising a homotetramer of PRPF19, CDC5L, PLRG1 and BCAS2, and at least three less stably associated proteins CTNNBL1, CWC15 and HSPA8. Interacts (via its WD40 repeat domain) directly with CDC5L (via its C-terminal); the interaction is required for mRNA splicing but not for spliceosome assembly. Component of the minor spliceosome, which splices U12-type introns. Within this complex, interacts with CRIPT. Also interacts directly in the complex with BCAS2 and PRPF19. Interacts with USB1.

The protein resides in the nucleus. Its subcellular location is the nucleus speckle. Involved in pre-mRNA splicing as component of the spliceosome. Component of the PRP19-CDC5L complex that forms an integral part of the spliceosome and is required for activating pre-mRNA splicing. As a component of the minor spliceosome, involved in the splicing of U12-type introns in pre-mRNAs. The chain is Pleiotropic regulator 1 (PLRG1) from Bos taurus (Bovine).